A 63-amino-acid polypeptide reads, in one-letter code: ATP synthase subunit epsilon, mitochondrial (63 aa).

F-type ATP synthases have 2 components, the catalytic core F(1) and the membrane-embedded component F(0), linked together by a central stalk and a peripheral stalk. The central stalk, also called rotor shaft, is often seen as part of F(1). The peripheral stalk is seen as part of F(0). F(0) contains the membrane channel next to the rotor. F-type ATP synthases form dimers but each monomer functions independently in ATP generation. The dimer consists of 18 different polypeptides: ATP1 (subunit alpha, part of F(1), 3 molecules per monomer), ATP2 (subunit beta, part of F(1), 3 molecules per monomer), ATP3 (subunit gamma, part of the central stalk), ATP4 (subunit b, part of the peripheral stalk), ATP5/OSCP (subunit 5/OSCP, part of the peripheral stalk), ATP6 (subunit a, part of the peripheral stalk), ATP7 (subunit d, part of the peripheral stalk), ATP8 (subunit 8, part of the peripheral stalk), OLI1 (subunit c, part of the rotor, 10 molecules per monomer), ATP14 (subunit h, part of the peripheral stalk), ATP15 (subunit epsilon, part of the central stalk), ATP16 (subunit delta, part of the central stalk), ATP17 (subunit f, part of the peripheral stalk), ATP18 (subunit i/j, part of the peripheral stalk). Dimer-specific subunits are ATP19 (subunit k, at interface between monomers), ATP20 (subunit g, at interface between monomers), TIM11 (subunit e, at interface between monomers). Also contains subunit L.

It is found in the mitochondrion inner membrane. Functionally, mitochondrial membrane ATP synthase (F(1)F(0) ATP synthase or Complex V) produces ATP from ADP in the presence of a proton gradient across the membrane which is generated by electron transport complexes of the respiratory chain. F-type ATP synthases consist of two structural domains, F(1) - containing the extramembraneous catalytic core, and F(0) - containing the membrane proton channel, linked together by a central stalk and a peripheral stalk. During catalysis, ATP synthesis in the catalytic domain of F(1) is coupled via a rotary mechanism of the central stalk subunits to proton translocation. Part of the complex F(1) domain and the central stalk which is part of the complex rotary element. Rotation of the central stalk against the surrounding alpha/ATP1(3)beta/ATP2(3) subunits leads to hydrolysis of ATP in three separate catalytic sites on the beta/ATP2 subunits. This Pichia angusta (Yeast) protein is ATP synthase subunit epsilon, mitochondrial.